The chain runs to 282 residues: Nucleotide-binding protein Ping_2894 (282 aa).

8–15 (GRSGSGKT) is an ATP binding site. 56-59 (DIRN) lines the GTP pocket.

Belongs to the RapZ-like family.

Functionally, displays ATPase and GTPase activities. The protein is Nucleotide-binding protein Ping_2894 of Psychromonas ingrahamii (strain DSM 17664 / CCUG 51855 / 37).